A 306-amino-acid polypeptide reads, in one-letter code: Methionyl-tRNA formyltransferase (306 aa).

110 to 113 contacts (6S)-5,6,7,8-tetrahydrofolate; it reads SLLP.

It belongs to the Fmt family.

The catalysed reaction is L-methionyl-tRNA(fMet) + (6R)-10-formyltetrahydrofolate = N-formyl-L-methionyl-tRNA(fMet) + (6S)-5,6,7,8-tetrahydrofolate + H(+). Its function is as follows. Attaches a formyl group to the free amino group of methionyl-tRNA(fMet). The formyl group appears to play a dual role in the initiator identity of N-formylmethionyl-tRNA by promoting its recognition by IF2 and preventing the misappropriation of this tRNA by the elongation apparatus. This Brucella suis (strain ATCC 23445 / NCTC 10510) protein is Methionyl-tRNA formyltransferase.